We begin with the raw amino-acid sequence, 150 residues long: Large ribosomal subunit protein uL15 (150 aa).

The span at 1-13 (MADNDAIKVHDLR) shows a compositional bias: basic and acidic residues. Positions 1-44 (MADNDAIKVHDLRPAPGAKTAKTRVGRGEASKGKTAGRGTKGTK) are disordered.

Belongs to the universal ribosomal protein uL15 family. As to quaternary structure, part of the 50S ribosomal subunit.

Binds to the 23S rRNA. This is Large ribosomal subunit protein uL15 from Micrococcus luteus (strain ATCC 4698 / DSM 20030 / JCM 1464 / CCM 169 / CCUG 5858 / IAM 1056 / NBRC 3333 / NCIMB 9278 / NCTC 2665 / VKM Ac-2230) (Micrococcus lysodeikticus).